A 369-amino-acid chain; its full sequence is 3-dehydroquinate synthase (369 aa).

NAD(+) is bound by residues 78–83 (DGERYK), 112–116 (GVIGD), 136–137 (TT), lysine 149, lysine 158, and 176–179 (TLTT). Residues glutamate 191, histidine 254, and histidine 271 each coordinate Zn(2+).

Belongs to the sugar phosphate cyclases superfamily. Dehydroquinate synthase family. NAD(+) is required as a cofactor. The cofactor is Co(2+). It depends on Zn(2+) as a cofactor.

The protein localises to the cytoplasm. It catalyses the reaction 7-phospho-2-dehydro-3-deoxy-D-arabino-heptonate = 3-dehydroquinate + phosphate. The protein operates within metabolic intermediate biosynthesis; chorismate biosynthesis; chorismate from D-erythrose 4-phosphate and phosphoenolpyruvate: step 2/7. Its function is as follows. Catalyzes the conversion of 3-deoxy-D-arabino-heptulosonate 7-phosphate (DAHP) to dehydroquinate (DHQ). In Nitrosomonas europaea (strain ATCC 19718 / CIP 103999 / KCTC 2705 / NBRC 14298), this protein is 3-dehydroquinate synthase.